The primary structure comprises 393 residues: 4-hydroxyphenylpyruvate dioxygenase (393 aa).

VOC domains lie at 17-148 (AFDH…LLER) and 179-339 (FLDH…IFSK). Residues H182, H267, and E350 each coordinate Fe cation.

The protein belongs to the 4HPPD family. Requires Fe cation as cofactor. In terms of tissue distribution, expressed in the hypodermis and intestine.

The enzyme catalyses 3-(4-hydroxyphenyl)pyruvate + O2 = homogentisate + CO2. The protein operates within amino-acid degradation; L-phenylalanine degradation; acetoacetate and fumarate from L-phenylalanine: step 3/6. In terms of biological role, key enzyme in the degradation of tyrosine. This is 4-hydroxyphenylpyruvate dioxygenase from Caenorhabditis elegans.